The primary structure comprises 456 residues: tRNA modification GTPase MnmE (456 aa).

Residues arginine 24, glutamate 81, and lysine 120 each coordinate (6S)-5-formyl-5,6,7,8-tetrahydrofolate. The region spanning 216–379 is the TrmE-type G domain; the sequence is GMTVVIAGRP…LREHLKACMG (164 aa). A K(+)-binding site is contributed by asparagine 226. Residues 226 to 231, 245 to 251, 270 to 273, 335 to 338, and 359 to 361 each bind GTP; these read NAGKSS, TEIAGTT, DTAG, NKAD, and SAR. Residue serine 230 coordinates Mg(2+). K(+)-binding residues include threonine 245, isoleucine 247, and threonine 250. Threonine 251 serves as a coordination point for Mg(2+). (6S)-5-formyl-5,6,7,8-tetrahydrofolate is bound at residue lysine 456.

The protein belongs to the TRAFAC class TrmE-Era-EngA-EngB-Septin-like GTPase superfamily. TrmE GTPase family. As to quaternary structure, homodimer. Heterotetramer of two MnmE and two MnmG subunits. It depends on K(+) as a cofactor.

Its subcellular location is the cytoplasm. Its function is as follows. Exhibits a very high intrinsic GTPase hydrolysis rate. Involved in the addition of a carboxymethylaminomethyl (cmnm) group at the wobble position (U34) of certain tRNAs, forming tRNA-cmnm(5)s(2)U34. The protein is tRNA modification GTPase MnmE of Pseudomonas savastanoi pv. phaseolicola (strain 1448A / Race 6) (Pseudomonas syringae pv. phaseolicola (strain 1448A / Race 6)).